Here is a 197-residue protein sequence, read N- to C-terminus: Adenylate kinase (197 aa).

12 to 17 (GSGKTT) serves as a coordination point for ATP. Residues 34 to 63 (STGDMLREEVASGSELGKTIESYIAKGALV) are NMP. AMP is bound by residues T35, R40, 61–63 (ALV), 88–91 (GYPR), and Q95. Residues 130–144 (GRRAEAAPGEERSDD) are LID. R131 is a binding site for ATP. 2 residues coordinate AMP: R141 and R152. Residue R180 coordinates ATP.

The protein belongs to the adenylate kinase family. In terms of assembly, monomer.

It localises to the cytoplasm. It carries out the reaction AMP + ATP = 2 ADP. Its pathway is purine metabolism; AMP biosynthesis via salvage pathway; AMP from ADP: step 1/1. Functionally, catalyzes the reversible transfer of the terminal phosphate group between ATP and AMP. Plays an important role in cellular energy homeostasis and in adenine nucleotide metabolism. This is Adenylate kinase from Sulfurovum sp. (strain NBC37-1).